A 167-amino-acid chain; its full sequence is MKIKAYIPAIAAVILSSNATLANQNQAYNSNHTTSLHQAIELLDNQITNIDNLFKNKLPFYESNSIKSKFITKDKQYIIIMEVPGFDKDHIKIKVNGNKLFVKGNIEDKNKADDSNNYMNKNFNYVISLYEDVDQKNISSSLKNGILTITLPRIEVKEQDAKEIPIN.

The 109-residue stretch at 59–167 folds into the sHSP domain; it reads PFYESNSIKS…EQDAKEIPIN (109 aa).

This sequence belongs to the small heat shock protein (HSP20) family.

The chain is Small heat shock protein C1 (hspC1) from Rickettsia bellii (strain RML369-C).